A 365-amino-acid chain; its full sequence is Aminotransferase poxL (365 aa).

R92 provides a ligand contact to pyridoxal 5'-phosphate. K193 carries the post-translational modification N6-(pyridoxal phosphate)lysine. E229 provides a ligand contact to pyridoxal 5'-phosphate.

The protein belongs to the class-IV pyridoxal-phosphate-dependent aminotransferase family. Pyridoxal 5'-phosphate serves as cofactor.

The protein operates within secondary metabolite biosynthesis. Functionally, aminotransferase; part of the gene cluster that mediates the biosynthesis of oxaleimides, cytotoxic compounds containing an unusual disubstituted succinimide moiety. The first step of the pathway is provided by the HR-PKS poxF that serves in a new mode of collaborative biosynthesis with the PKS-NRPS poxE, by providing the olefin containing amino acid substrate via the synthesis of an ACP-bound dec-4-enoate. The cytochrome P450 monooxygenase poxM-catalyzed oxidation at the alpha-position creates the enzyme-bound 2-hydroxydec-4-enoyl-ACP thioester, which may be prone to spontaneous hydrolysis to yield 2-hydroxydec-4-enoic acid due to increased electrophilicity of the carbonyl. 2-hydroxydec-4-enoic acid can then be further oxidized by poxM to yield the alpha-ketoacid 2-oxodec-4-enoicacid, which is reductively aminated by the aminotransferase poxL to yield (S,E)-2-aminodec-4-enoic acid. The Hybrid PKS-NRPS synthetase poxE then performs condensation between the octaketide product of its PKS modules and the amino group of (S,E)-2-aminodec-4-enoic acid which is activated and incorporated by the adenylation domain. The resulting aminoacyl product can be cyclized by the Diels-Alderase PoxQ and reductively released by the reductive (R) domain of poxE to yield an aldehyde intermediate. The released aldehyde is then substrate for a Knoevenagel condensation by the hydrolyase poxO followed by an oxidation at the 5-position of the pyrrolidone ring. The presence of the olefin from the amino acid building block allows for migration of the substituted allyl group to occur. This allylic transposition reaction takes place in a conjugate addition, semipinacol-like fashion to yield a succinimide intermediate. Iterative two-electron oxidations of the C7 methyl of the succinimide intermediate to the carboxylic acid can be catalyzed by one of two remaining cytochrome P450 monooxygenasess poxC or poxD to yield oxaleimide A. Subsequent oxidation yields the maleimide scaffold oxaleimide I. Both oxaleimide A and oxaleimide I can undergo oxidative modifications in the decalin ring to yield the series of products oxaleimides B to H. The sequence is that of Aminotransferase poxL from Penicillium oxalicum.